We begin with the raw amino-acid sequence, 491 residues long: GTPase Der (491 aa).

Residues 3–166 (PVIALVGRPN…AALGIFPRDD (164 aa)) form the EngA-type G 1 domain. GTP contacts are provided by residues 9–16 (GRPNVGKS), 56–60 (DTGGI), and 118–121 (NKVD). Residues 164-191 (RDDEGEEGEGEAEVVAEGEEPKRVPGPS) form a disordered region. Residues 166 to 181 (DEGEEGEGEAEVVAEG) are compositionally biased toward acidic residues. Basic and acidic residues predominate over residues 182-191 (EEPKRVPGPS). One can recognise an EngA-type G 2 domain in the interval 196–369 (IKIAIIGRPN…SVQAAFQSAV (174 aa)). Residues 202–209 (GRPNVGKS), 249–253 (DTAGV), and 314–317 (NKWD) each bind GTP. The KH-like domain maps to 370 to 454 (TRWPTSRLTR…PIRIEYKGGD (85 aa)). The segment covering 452-464 (GGDNPYEGKKNSL) has biased composition (basic and acidic residues). Residues 452 to 491 (GGDNPYEGKKNSLTERQVNKKRRLMSHHKKAEKKRRDKKR) form a disordered region. Basic residues predominate over residues 470–491 (NKKRRLMSHHKKAEKKRRDKKR).

This sequence belongs to the TRAFAC class TrmE-Era-EngA-EngB-Septin-like GTPase superfamily. EngA (Der) GTPase family. In terms of assembly, associates with the 50S ribosomal subunit.

Functionally, GTPase that plays an essential role in the late steps of ribosome biogenesis. The protein is GTPase Der of Azotobacter vinelandii (strain DJ / ATCC BAA-1303).